The sequence spans 1157 residues: MNRNIFITLLISLLALSGCSGDTCIDPDDFGFIKFNISSRYDPSEVTSRQEGDQVAPWRDSAYKVNGYPLTIMVRPWDYMSGDKNTSGMLSAWCPWYGQQNNFTTLAEFCVRLRPCQFTDGKMCPTPTPRDAPINNAPCILTNGVGLYFLIADKGSNPNMSPDSQRSPKGITQHLGEPVASQDYEFYSISSTGKFLQAGGINYQYGCTSLPCDQASNYAQSSLYFKILDKFYDDNSGQYRVVIKSGVSDTRPDPLQFLTNLIKNELFGTSDKDPGIVRQTYQQIIETPGYRLSVSALLTLYIMFTGFSFLIGNINMTHVELVVRILKVSVVSILLSTSKAWTFFHDYLFVFFVEGLAQILQIVQDASTGQSLLSLLISPQTLSKLFSLLFVDPLGFIYIILYLIALYFIFLLIFKATIIYLTALITIGMIITMAPIFICFMLFNITRSLFENWLRQLISYAIQPIILFVGIAFIGMIIKTEIQSTLGFAVCKKDFPDLGPINQIFGSFTEDLDSSIGNSIFYWWFPVPMKGGIENFTQADILVPEDYTKKDGTKCLAYQCIDKRYIQLPFLDLVKDANRISNFINGKFVQLDGLLLIFVSIYLLSKFNDTAISTASFIAGTSGNLTSIQAVNQQSYDSIMKQVNRPINYATGVISKPINRMQEQTSMFFAEKYQGLMMSRLENKALSSSANKAVQNEVKRKYGIDHKDVNMQAGADYKNGISKLLDNKTFLPKGGDLDVKKLATMNFGQLRDEFAKNKYGAKNYSSLTSDQKLELDKFMKSDLGEKGKSAKSLRELASDANFTRDYQSAYKYAHKEMSGRGVGLFGKNIGVLRSWQEMENRMKTKRELKEQKRVAIGEKIYAGYTGLKRDALTAIVGKDLRDKYEGNLTSAEWHDFDYNDPQLRTYSESLKDKERAREVKELQMQINKETLAVQEDILSPEYLARLKRPSDVEYYQELGQRRLIHEVRDRLSEGSDPVIMGDRFMQEKATDDQMRTMIDNAHQKHAEFIDQDRYTRRQEHYDIMHEKAQENIDRTYKEIKDHFKRDDIKLEEMPALIAQYEREKPIESFDSKTELSLDKRIEEAVSNFNINAKNYEYSASVLNNIEERKQAITDEVNTQIDRINKYRENAKMPQYQKPVENSGRKLRKLEDHLRNMK.

The signal sequence occupies residues 1-18 (MNRNIFITLLISLLALSG). Cys-19 carries the N-palmitoyl cysteine lipid modification. The S-diacylglycerol cysteine moiety is linked to residue Cys-19. Transmembrane regions (helical) follow at residues 292–312 (LSVS…FLIG), 394–414 (LGFI…LLIF), 423–443 (ALIT…FMLF), and 458–478 (ISYA…GMII). The interval 1134–1157 (QYQKPVENSGRKLRKLEDHLRNMK) is disordered. A compositionally biased stretch (basic and acidic residues) spans 1148-1157 (KLEDHLRNMK).

The protein belongs to the TrbL/VirB6 family.

It localises to the cell membrane. This is an uncharacterized protein from Rickettsia bellii (strain RML369-C).